The primary structure comprises 1170 residues: MAASSEILPESWQVFINFRGADLRNGFISHLAGALTSAGITYYIDTEEVPSEDLTVLFKRIEESEIALSIFSSNYAESKWCLDELVKIMEQVKKGKLRIMPVFFNVKPEEVREQNGEFGLKLYGEGKSKRPNIPNWENALRSVPSKIGLNLANFRNEKELLDKIIDSIKKVLARITRASRVAESLNGISKDSEAKNVDTFSPNSSDFPSTSIDDDLSINSPQYQATIPPASREGERLNTISTVSSTGSIEHPPPNYGIEPRLKEMEEKLDFDSLETKTVGIVGMPGIGKTTLAETLYRKWEHKFERSMFFPDASKMANEHGMCWLQKRLLEELLKDTNLNIGYTTNEHEFCKDVLLLKKVFLVIDNVSSEEQIETLFGKWNWIKNGSKIVITSSDESMLKGFVKDTYVVPSLNSRDSLLWFTNHAFGLDDAQGNLVKLSKHFLNYAKGNPLALGAFGVELCGKDKADWEKRIKTLTLISNKMIQDVLRRRYDELTERQKDIFLDVACFFKSENESYVRHVVNSCDSESTKSWDEITDLKGKFLVNISGGRVEMHDILCTFAKELASQALTEDTRVHLRLWNYQDIMWFLNNELEMENVRGIFLDMSKVPEEMTFDGNIFSNMCNLRYLKIYSSVCHKEGEGIFKFDTVREIQLPLDKVRYLHWMKYPWEKLPSDFNPENLVDLELPYSSIKKVWEGVKDTPILKWANLSYSSKLTNLLGLSNAKNLERLNLEGCTSLLKLPQEMENMKSLVFLNMRRCTSLTCLQSIKVSSLKILILSDCSKLEEFEVISENLEELYLDGTAIKGLPPAAGDLTRLVVLNMEGCTELESLPKRLGKQKALQELVLSGCSKLESVPTDVKDMKHLRLLLLDGTRIRKIPKIKSLKCLCLSRNIAMVNLQDNLKDFSNLKCLVMKNCENLRYLPSLPKCLEYLNVYGCERLESVENPLVADRLTLFLDRSEELRSTFLFTNCHNLFQDAKDSISTYAKWKCHRLAVECYEQDIVSGAFFNTCYPGYIVPSWFDHQAVGSVLEPRLEPHWYNTMLSGIALCAVVSFHENQDPIIGSFSVKCTLQFENEDGSLRFDCDIGCLNEPGMIEADHVFIGYVTCSRLKDHHSIPIHHPTTVKMQFHLTDACKSKVVDCGFRLMYTQSRGCLLEEEVNANFTKLYLGLL.

A TIR domain is found at Glu-10–Leu-172. Glu-84 is an active-site residue. The disordered stretch occupies residues Glu-193–Asn-219. Over residues Asp-198–Asn-219 the composition is skewed to polar residues. Positions Arg-261 to Asn-513 constitute an NB-ARC domain. 12 LRR repeats span residues Met-595–Gly-616, Met-622–Phe-645, Asp-646–Lys-670, Pro-677–Thr-700, Ala-723–Met-747, Leu-761–Glu-785, Ser-790–Leu-813, Arg-815–Gln-837, Lys-838–Met-861, Lys-862–Cys-885, Leu-888–Phe-904, and Ser-905–Tyr-930.

The catalysed reaction is NAD(+) + H2O = ADP-D-ribose + nicotinamide + H(+). Its function is as follows. TIR-NB-LRR receptor-like protein that may play a role in plant innate immunity. May trigger hypersensitive programmed cell death in response to pathogen attack. Involved in tolerance to tobacco ringspot virus (TRSV). The polypeptide is Disease resistance protein LAZ5 (Arabidopsis thaliana (Mouse-ear cress)).